The sequence spans 522 residues: Neutral amino acid uniporter 4 (522 aa).

The next 10 membrane-spanning stretches (helical) occupy residues 115–135, 181–201, 226–246, 255–275, 293–313, 329–349, 377–397, 409–429, 435–455, and 467–487; these read AGVL…IHCM, LVDW…FVFL, SLDL…LVFI, LSFF…QYVI, YPLF…VLPL, IGMA…YFCF, FGIY…ILPA, LCEF…AVLI, VISF…PPLV, and PWVI…FIAG. N-linked (GlcNAc...) asparagine glycosylation is present at N515.

Belongs to the amino acid/polyamine transporter 2 family.

Its subcellular location is the lysosome membrane. It carries out the reaction L-tryptophan(in) = L-tryptophan(out). The enzyme catalyses L-alanine(in) = L-alanine(out). It catalyses the reaction L-proline(in) = L-proline(out). In terms of biological role, uniporter that mediates the transport of neutral amino acids like L-tryptophan, proline and alanine. The transport activity is sodium ions-independent, electroneutral and therefore functions via facilitated diffusion. This Xenopus laevis (African clawed frog) protein is Neutral amino acid uniporter 4.